The primary structure comprises 199 residues: Transmembrane protein 223 (199 aa).

Residues M1–R43 are Mitochondrial matrix-facing. Residues F44–V64 form a helical membrane-spanning segment. Topologically, residues A65–G94 are mitochondrial intermembrane. The helical transmembrane segment at L95–L115 threads the bilayer. The Mitochondrial matrix portion of the chain corresponds to R116–L199.

This sequence belongs to the TMEM223 family. In terms of assembly, associates with the mitochondrial ribosome.

It is found in the mitochondrion inner membrane. Mitochondrial ribosome-associated protein involved in the first steps of cytochrome c oxidase complex (complex IV) biogenesis. Stimulates the translation of MT-CO1 mRNA and is a constituent of early MT-CO1 assembly intermediates. This chain is Transmembrane protein 223, found in Mus musculus (Mouse).